The chain runs to 283 residues: Cuticle collagen 49 (283 aa).

A signal peptide spans 1–19; the sequence is MWKFVIGSVSTAAFFVSVC. Residues 90-283 are disordered; it reads EPTKNCPAGP…GYCTCPPRTA (194 aa). The segment covering 127–139 has biased composition (basic and acidic residues); sequence VVIHDMPNPKECI. Residues 143 to 155 show a composition bias toward pro residues; the sequence is AGPPGPPGPPGPL. Residues 185-204 are compositionally biased toward low complexity; it reads QGPPGSAGRAGPRGQAGQPG. The Collagen-like domain maps to 213-271; that stretch reads GRPGPQGPLGEPGAQGEPGVDGKDGALGAPGRKAENGRPGKRGKDGVAGVPGTRGKEGE. The segment covering 244 to 257 has biased composition (basic and acidic residues); it reads RKAENGRPGKRGKD.

Belongs to the cuticular collagen family. In terms of assembly, collagen polypeptide chains are complexed within the cuticle by disulfide bonds and other types of covalent cross-links.

Probable cuticular collagen-like protein. Nematode cuticles are composed largely of collagen-like proteins. The cuticle functions both as an exoskeleton and as a barrier to protect the worm from its environment. Acts downstream of the Wnt signaling pathway, perhaps in the formation of the adult cuticle. In Caenorhabditis elegans, this protein is Cuticle collagen 49.